Here is a 393-residue protein sequence, read N- to C-terminus: MTVPDKRKDLMIVNMGPQHPSMHGVLRLIVTLDGEDVIDCEPVLGYLHRGMEKIAENRTIIQYLPYVTRWDYLATMFTEAITVNAPEQLGNIQVPKRASYIRVIMLELSRIASHLLWLGPFMADIGAQTPFFYIFRERELIYDLFEAATGMRMMHNFFRIGGVAADLPHGWIDKCLDFCDYFLTGVVEYQKLITRNPIFLERVEGVGIIGGEEAINWGLSGPMLRASGIPWDLRKVDHYESYDEFDWEIQWQKEGDSLARYLVRINEMIESIKIIQQVLEGIPGGPYENLEVRRFARPKDSEWNDFEYRFISKKPSPSFELSKQELYVRVEAPKGELGVFLIGDNSVFPWRWKIRPPGFINLQILPQLVKRMKLADIMTILGSIDIIMGEVDR.

It belongs to the complex I 49 kDa subunit family. NDH is composed of at least 16 different subunits, 5 of which are encoded in the nucleus.

The protein resides in the plastid. It is found in the chloroplast thylakoid membrane. The enzyme catalyses a plastoquinone + NADH + (n+1) H(+)(in) = a plastoquinol + NAD(+) + n H(+)(out). The catalysed reaction is a plastoquinone + NADPH + (n+1) H(+)(in) = a plastoquinol + NADP(+) + n H(+)(out). NDH shuttles electrons from NAD(P)H:plastoquinone, via FMN and iron-sulfur (Fe-S) centers, to quinones in the photosynthetic chain and possibly in a chloroplast respiratory chain. The immediate electron acceptor for the enzyme in this species is believed to be plastoquinone. Couples the redox reaction to proton translocation, and thus conserves the redox energy in a proton gradient. The sequence is that of NAD(P)H-quinone oxidoreductase subunit H, chloroplastic from Ceratophyllum demersum (Rigid hornwort).